The following is a 507-amino-acid chain: Decapping nuclease RAI1 (507 aa).

R73 contacts substrate. Residue E230 coordinates a divalent metal cation. C272 and E289 together coordinate substrate. D291, E306, and L307 together coordinate a divalent metal cation. 2 residues coordinate substrate: K308 and Q340.

This sequence belongs to the DXO/Dom3Z family. As to quaternary structure, interacts with RAT1; the interaction is direct, stabilizes RAT1 protein structure and stimulates its exoribonuclease activity. The interaction also stimulates RAI1 pyrophosphohydrolase activity, probably by recruiting it to mRNA substrates. A divalent metal cation serves as cofactor.

The protein resides in the nucleus. The enzyme catalyses a 5'-end NAD(+)-phospho-ribonucleoside in mRNA + H2O = a 5'-end phospho-ribonucleoside in mRNA + NAD(+) + H(+). The catalysed reaction is a 5'-end (N(7)-methyl 5'-triphosphoguanosine)-ribonucleoside-ribonucleotide in mRNA + H2O = a (N(7)-methyl 5'-triphosphoguanosine)-nucleoside + a 5'-end phospho-ribonucleoside in mRNA + H(+). It carries out the reaction a 5'-end triphospho-ribonucleoside in mRNA + H2O = a 5'-end phospho-ribonucleoside in mRNA + diphosphate + H(+). Its function is as follows. Decapping enzyme for NAD-capped RNAs: specifically hydrolyzes the nicotinamide adenine dinucleotide (NAD) cap from a subset of RNAs by removing the entire NAD moiety from the 5'-end of an NAD-capped RNA. The NAD-cap is present at the 5'-end of some RNAs and snoRNAs. In contrast to the canonical 5'-end N7 methylguanosine (m7G) cap, the NAD cap promotes mRNA decay. Also acts as a non-canonical decapping enzyme that removes the entire cap structure of m7G capped or incompletely capped RNAs. Has decapping activity toward incomplete 5'-end m7G cap mRNAs such as unmethylated 5'-end-capped RNA (cap0), while it has no activity toward 2'-O-ribose methylated m7G cap (cap1). Also possesses RNA 5'-pyrophosphohydrolase activity by hydrolyzing the 5'-end triphosphate to release pyrophosphates. Stimulates exoribonuclease activity of Rat1, allowing it to degrade RNAs with stable secondary structure more effectively. In Mycosarcoma maydis (Corn smut fungus), this protein is Decapping nuclease RAI1 (RAI1).